The primary structure comprises 420 residues: Phosphoribosylamine--glycine ligase (420 aa).

Positions 108–314 (KQFMEKYAIP…FAALIDALLH (207 aa)) constitute an ATP-grasp domain. 134 to 195 (LDERGVPIVI…EDFLAGEEFS (62 aa)) contacts ATP. Residues glutamate 284 and asparagine 286 each coordinate Mg(2+).

It belongs to the GARS family. Mg(2+) serves as cofactor. Mn(2+) is required as a cofactor.

It carries out the reaction 5-phospho-beta-D-ribosylamine + glycine + ATP = N(1)-(5-phospho-beta-D-ribosyl)glycinamide + ADP + phosphate + H(+). It functions in the pathway purine metabolism; IMP biosynthesis via de novo pathway; N(1)-(5-phospho-D-ribosyl)glycinamide from 5-phospho-alpha-D-ribose 1-diphosphate: step 2/2. The protein is Phosphoribosylamine--glycine ligase of Listeria monocytogenes serotype 4b (strain F2365).